Consider the following 621-residue polypeptide: tRNA uridine 5-carboxymethylaminomethyl modification enzyme MnmG (621 aa).

Position 9–14 (9–14) interacts with FAD; that stretch reads GGGHAG. Position 268 to 282 (268 to 282) interacts with NAD(+); it reads GPRYCPSIEDKINRF.

This sequence belongs to the MnmG family. As to quaternary structure, homodimer. Heterotetramer of two MnmE and two MnmG subunits. It depends on FAD as a cofactor.

It is found in the cytoplasm. Its function is as follows. NAD-binding protein involved in the addition of a carboxymethylaminomethyl (cmnm) group at the wobble position (U34) of certain tRNAs, forming tRNA-cmnm(5)s(2)U34. This chain is tRNA uridine 5-carboxymethylaminomethyl modification enzyme MnmG, found in Campylobacter fetus subsp. fetus (strain 82-40).